Consider the following 186-residue polypeptide: Elongation factor P (186 aa).

It belongs to the elongation factor P family.

It is found in the cytoplasm. It participates in protein biosynthesis; polypeptide chain elongation. Its function is as follows. Involved in peptide bond synthesis. Stimulates efficient translation and peptide-bond synthesis on native or reconstituted 70S ribosomes in vitro. Probably functions indirectly by altering the affinity of the ribosome for aminoacyl-tRNA, thus increasing their reactivity as acceptors for peptidyl transferase. This is Elongation factor P from Shewanella woodyi (strain ATCC 51908 / MS32).